Consider the following 437-residue polypeptide: Adenylyltransferase and sulfurtransferase MOCS3 (437 aa).

ATP-binding positions include Gly-82, Asp-103, Thr-110–Arg-114, Lys-127, and Asp-171–Asn-172. Zn(2+) is bound by residues Cys-212 and Cys-215. Residue Cys-229 is the Glycyl thioester intermediate; for adenylyltransferase activity of the active site. Zn(2+) is bound by residues Cys-287 and Cys-290. In terms of domain architecture, Rhodanese spans Ser-337 to Pro-435. Cys-391 functions as the Cysteine persulfide intermediate; for sulfurtransferase activity in the catalytic mechanism.

It in the N-terminal section; belongs to the HesA/MoeB/ThiF family. UBA4 subfamily. The cofactor is Zn(2+).

The protein localises to the cytoplasm. Its subcellular location is the cytosol. The catalysed reaction is [molybdopterin-synthase sulfur-carrier protein]-C-terminal Gly-Gly + ATP + H(+) = [molybdopterin-synthase sulfur-carrier protein]-C-terminal Gly-Gly-AMP + diphosphate. It catalyses the reaction [molybdopterin-synthase sulfur-carrier protein]-C-terminal Gly-Gly-AMP + S-sulfanyl-L-cysteinyl-[cysteine desulfurase] + AH2 = [molybdopterin-synthase sulfur-carrier protein]-C-terminal-Gly-aminoethanethioate + L-cysteinyl-[cysteine desulfurase] + A + AMP + 2 H(+). Its pathway is tRNA modification; 5-methoxycarbonylmethyl-2-thiouridine-tRNA biosynthesis. It functions in the pathway cofactor biosynthesis; molybdopterin biosynthesis. Its function is as follows. Plays a central role in 2-thiolation of mcm(5)S(2)U at tRNA wobble positions of cytosolic tRNA(Lys), tRNA(Glu) and tRNA(Gln). Also essential during biosynthesis of the molybdenum cofactor. Acts by mediating the C-terminal thiocarboxylation of sulfur carriers URM1 and MOCS2A. Its N-terminus first activates URM1 and MOCS2A as acyl-adenylates (-COAMP), then the persulfide sulfur on the catalytic cysteine is transferred to URM1 and MOCS2A to form thiocarboxylation (-COSH) of their C-terminus. The reaction probably involves hydrogen sulfide that is generated from the persulfide intermediate and that acts as a nucleophile towards URM1 and MOCS2A. Subsequently, a transient disulfide bond is formed. Does not use thiosulfate as sulfur donor; NFS1 probably acting as a sulfur donor for thiocarboxylation reactions. The sequence is that of Adenylyltransferase and sulfurtransferase MOCS3 from Aedes aegypti (Yellowfever mosquito).